Reading from the N-terminus, the 522-residue chain is Endochitinase 11 (522 aa).

The first 24 residues, 1–24, serve as a signal peptide directing secretion; it reads MLFSMVMFTERWWVGSKDCPRVPA. N148 and N275 each carry an N-linked (GlcNAc...) asparagine glycan. A GH18 domain is found at 235 to 522; sequence KHVYAPYVDF…ALTCLRNSTA (288 aa). The Proton donor role is filled by E346. N-linked (GlcNAc...) asparagine glycosylation is found at N455 and N519.

Belongs to the glycosyl hydrolase 18 family. Chitinase class V subfamily.

The protein localises to the secreted. The enzyme catalyses Random endo-hydrolysis of N-acetyl-beta-D-glucosaminide (1-&gt;4)-beta-linkages in chitin and chitodextrins.. Secreted chitinase involved in the degradation of chitin, a component of the cell walls of fungi and exoskeletal elements of some animals (including worms and arthropods). Participates in the infection process and directly acts in the penetration process of the host cuticle. In Metarhizium anisopliae (Entomophthora anisopliae), this protein is Endochitinase 11 (chi11).